Reading from the N-terminus, the 268-residue chain is Myb-related protein 315 (268 aa).

HTH myb-type domains follow at residues 9-61 (KFGL…MNYL) and 62-116 (RPDL…KKKL). 2 DNA-binding regions (H-T-H motif) span residues 37 to 61 (WRVI…MNYL) and 89 to 112 (WSKI…NTHI).

Expressed in roots, stems, leaves, seed pods and flowers. Strongest expression in the stem.

The protein resides in the nucleus. Transcription factor. This chain is Myb-related protein 315, found in Antirrhinum majus (Garden snapdragon).